We begin with the raw amino-acid sequence, 115 residues long: NADH-ubiquinone oxidoreductase chain 3 (115 aa).

Helical transmembrane passes span 3–23 (LILTLLINTLLSSVLVLIAFW), 55–75 (FFLVAITFLLFDLEIALLLPL), and 86–106 (TMLTMALILISLLAASLAYEW).

This sequence belongs to the complex I subunit 3 family. Core subunit of respiratory chain NADH dehydrogenase (Complex I) which is composed of 45 different subunits. Interacts with TMEM186. Interacts with TMEM242.

It localises to the mitochondrion inner membrane. It carries out the reaction a ubiquinone + NADH + 5 H(+)(in) = a ubiquinol + NAD(+) + 4 H(+)(out). In terms of biological role, core subunit of the mitochondrial membrane respiratory chain NADH dehydrogenase (Complex I) which catalyzes electron transfer from NADH through the respiratory chain, using ubiquinone as an electron acceptor. Essential for the catalytic activity of complex I. This is NADH-ubiquinone oxidoreductase chain 3 from Rhinoceros unicornis (Greater Indian rhinoceros).